The following is a 211-amino-acid chain: Probable GTP-binding protein EngB (211 aa).

The 175-residue stretch at 30–204 (EGFEVAFAGR…YTVLADWMEL (175 aa)) folds into the EngB-type G domain. GTP contacts are provided by residues 38-45 (GRSNAGKS), 64-68 (GRTQL), 82-85 (DLPG), 149-152 (TKAD), and 182-185 (LFSA). The Mg(2+) site is built by serine 45 and threonine 66.

This sequence belongs to the TRAFAC class TrmE-Era-EngA-EngB-Septin-like GTPase superfamily. EngB GTPase family. Requires Mg(2+) as cofactor.

Necessary for normal cell division and for the maintenance of normal septation. This chain is Probable GTP-binding protein EngB, found in Pseudomonas savastanoi pv. phaseolicola (strain 1448A / Race 6) (Pseudomonas syringae pv. phaseolicola (strain 1448A / Race 6)).